Reading from the N-terminus, the 376-residue chain is NIF3-like protein 1 (376 aa).

N6-acetyllysine is present on Lys108. The mediates interaction with COPS2 stretch occupies residues Leu243 to Val376. Phosphothreonine is present on Thr254. Ser258 carries the phosphoserine modification.

It belongs to the GTP cyclohydrolase I type 2/NIF3 family. Homodimer. Interacts with COPS2. Interacts with THOC7. Ubiquitous. Detected in all tissues tested with higher expression in cerebellum, heart and kidney and to a lower level in cerebrum, lung, liver, spleen and muscle.

The protein localises to the cytoplasm. It localises to the nucleus. Its function is as follows. May function as a transcriptional corepressor through its interaction with COPS2, negatively regulating the expression of genes involved in neuronal differentiation. The sequence is that of NIF3-like protein 1 from Mus musculus (Mouse).